The chain runs to 283 residues: Circadian clock oscillator protein KaiA (283 aa).

Residues 3-133 (QSTALTICGL…VKLCPGCAVP (131 aa)) form a psR domain, binds oxidized quinones region. The region spanning 3-163 (QSTALTICGL…RLSQKLKERL (161 aa)) is the KaiA N-terminal domain. Residues 164–172 (GYLGVYYKR) are flexible linker. Residues 173–281 (DTAFFFRRMS…CEMYRRSIPR (109 aa)) form the KaiA C-terminal domain.

Homodimer. The KaiABC complex composition changes during the circadian cycle to control KaiC phosphorylation. Complexes KaiC(6), KaiA(2-4):KaiC(6), KaiB(6):KaiC(6) and KaiC(6):KaiB(6):KaiA(12) are among the most important forms, many form cooperatively. KaiA and CikA bind to the same region of the KaiB(fs) form and therefore compete.

Functionally, key component of the KaiABC oscillator complex, which constitutes the main circadian regulator in cyanobacteria. Complex composition changes during the circadian cycle to control KaiC phosphorylation. KaiA stimulates KaiC autophosphorylation, while KaiB sequesters KaiA, leading to KaiC autodephosphorylation. KaiA binding to the KaiC CII domain during the subjective day yields KaiA(2-4):KaiC(6) complexes which stimulate KaiC autophosphorylation. Phospho-Ser-431 KaiC accumulation triggers binding of KaiB during the subjective night to form the KaiB(6):KaiC(6) complex, leading to changes in the output regulators CikA and SasA. KaiB(6):KaiC(6) formation exposes a site for KaiA binding on KaiB that sequesters KaiA from KaiC's CII domain, making the KaiC(6):KaiB(6):KaiA(12) complex resulting in KaiC autodephosphorylation. Complete dephosphorylation of KaiC leads to dissociation of KaiA(2):KaiB(1), completing 1 cycle of the Kai oscillator. In terms of biological role, binds oxidized quinones via the N-terminal PsR domain, allowing it to sense redox changes and possibly mediate clock input. This chain is Circadian clock oscillator protein KaiA, found in Thermostichus vulcanus (Synechococcus vulcanus).